The following is a 206-amino-acid chain: Ribosomal RNA small subunit methyltransferase G (206 aa).

S-adenosyl-L-methionine is bound by residues glycine 73, leucine 78, 124 to 125, and arginine 139; that span reads VE.

The protein belongs to the methyltransferase superfamily. RNA methyltransferase RsmG family.

The protein resides in the cytoplasm. The catalysed reaction is guanosine(527) in 16S rRNA + S-adenosyl-L-methionine = N(7)-methylguanosine(527) in 16S rRNA + S-adenosyl-L-homocysteine. Its function is as follows. Specifically methylates the N7 position of guanine in position 527 of 16S rRNA. This chain is Ribosomal RNA small subunit methyltransferase G, found in Idiomarina loihiensis (strain ATCC BAA-735 / DSM 15497 / L2-TR).